The primary structure comprises 50 residues: Large ribosomal subunit protein bL33A (50 aa).

Belongs to the bacterial ribosomal protein bL33 family.

In Mycoplasmopsis pulmonis (strain UAB CTIP) (Mycoplasma pulmonis), this protein is Large ribosomal subunit protein bL33A (rpmG1).